A 784-amino-acid polypeptide reads, in one-letter code: ATP-dependent 6-phosphofructokinase, platelet type (784 aa).

N-acetylmethionine is present on M1. The N-terminal catalytic PFK domain 1 stretch occupies residues 1 to 398 (MSDLDSSSSS…NLNTYKRLAI (398 aa)). A phosphoserine mark is found at S2, S6, and S20. ATP-binding positions include G33, 96 to 97 (RC), and 126 to 129 (GDGS). D127 contacts Mg(2+). S141 carries the phosphoserine modification. Residues 172-174 (SID), R209, 216-218 (MGR), E272, R300, and 306-309 (HVQR) contribute to the substrate site. D174 (proton acceptor) is an active-site residue. K394 carries the N6-acetyllysine modification. The interdomain linker stretch occupies residues 399–410 (KLPDEKIVKSNC). A C-terminal regulatory PFK domain 2 region spans residues 411 to 784 (NVAVINVGAP…LESLQHHEEL (374 aa)). R480 is a beta-D-fructose 2,6-bisphosphate binding site. An N6-acetyllysine modification is found at K485. Beta-D-fructose 2,6-bisphosphate is bound by residues 537-541 (TVSNN), R575, 582-584 (MGG), and E638. The O-linked (GlcNAc) serine glycan is linked to S539. Y650 bears the Phosphotyrosine mark. Beta-D-fructose 2,6-bisphosphate is bound by residues R664 and 670–673 (HMQQ). K687 is modified (N6-acetyllysine). R743 lines the beta-D-fructose 2,6-bisphosphate pocket.

Belongs to the phosphofructokinase type A (PFKA) family. ATP-dependent PFK group I subfamily. Eukaryotic two domain clade 'E' sub-subfamily. In terms of assembly, homo- and heterotetramers. Phosphofructokinase (PFK) enzyme functions as a tetramer composed of different combinations of 3 types of subunits, called PFKM (M), PFKL (L) and PFKP (P). The composition of the PFK tetramer differs according to the tissue type it is present in. The kinetic and regulatory properties of the tetrameric enzyme are dependent on the subunit composition, hence can vary across tissues. Interacts with ATG4B; promoting phosphorylation of ATG4B. It depends on Mg(2+) as a cofactor. In terms of processing, glcNAcylation decreases enzyme activity. Expression is constant during tumor growth and markedly decreases when cell proliferation stops.

The protein resides in the cytoplasm. It carries out the reaction beta-D-fructose 6-phosphate + ATP = beta-D-fructose 1,6-bisphosphate + ADP + H(+). Its pathway is carbohydrate degradation; glycolysis; D-glyceraldehyde 3-phosphate and glycerone phosphate from D-glucose: step 3/4. With respect to regulation, allosterically activated by ADP, AMP, or fructose 2,6-bisphosphate, and allosterically inhibited by ATP or citrate. Functionally, catalyzes the phosphorylation of D-fructose 6-phosphate to fructose 1,6-bisphosphate by ATP, the first committing step of glycolysis. The sequence is that of ATP-dependent 6-phosphofructokinase, platelet type (Pfkp) from Mus musculus (Mouse).